Here is a 563-residue protein sequence, read N- to C-terminus: Merozoite receptor PK66 (563 aa).

Residues 1-13 (MNKIYYILFLSAQ) form the signal peptide. The Extracellular portion of the chain corresponds to 14-487 (CLVHMGKCER…DGKHKKKMLL (474 aa)). Asn-36, Asn-107, Asn-176, Asn-189, Asn-238, and Asn-441 each carry an N-linked (GlcNAc...) asparagine glycan. Residues 488 to 508 (IIIGVTGAVCVVAVASLFYFR) traverse the membrane as a helical segment. Residues 509–563 (KKAQDDKYDKMDQAEAYGKTANTRKDEMLDPEASFWGEDKRASHTTPVLMEKPYY) are Cytoplasmic-facing.

This sequence belongs to the apicomplexan parasites AMA1 family.

It localises to the membrane. In terms of biological role, merozoite receptor PK66 is a surface antigen involved in parasite invasion of erythrocytes. The protein is Merozoite receptor PK66 (PK66) of Plasmodium knowlesi (strain nuri).